We begin with the raw amino-acid sequence, 648 residues long: Macrolide export ATP-binding/permease protein MacB (648 aa).

Residues 5-243 (LELCNVSRSY…QGVDAAVVNT (239 aa)) form the ABC transporter domain. Residue 41–48 (GVSGSGKS) coordinates ATP. The next 5 membrane-spanning stretches (helical) occupy residues 273-293 (LLTM…VVVG), 417-437 (ANVV…IGVA), 523-543 (LFLT…VMNI), 578-598 (LVCL…AFML), and 611-631 (LTAL…FGWL).

The protein belongs to the ABC transporter superfamily. Macrolide exporter (TC 3.A.1.122) family. In terms of assembly, homodimer. Part of the tripartite efflux system MacAB-TolC, which is composed of an inner membrane transporter, MacB, a periplasmic membrane fusion protein, MacA, and an outer membrane component, TolC. The complex forms a large protein conduit and can translocate molecules across both the inner and outer membranes. Interacts with MacA.

Its subcellular location is the cell inner membrane. In terms of biological role, part of the tripartite efflux system MacAB-TolC. MacB is a non-canonical ABC transporter that contains transmembrane domains (TMD), which form a pore in the inner membrane, and an ATP-binding domain (NBD), which is responsible for energy generation. Confers resistance against macrolides. This Salmonella paratyphi A (strain ATCC 9150 / SARB42) protein is Macrolide export ATP-binding/permease protein MacB.